Consider the following 491-residue polypeptide: Probable malate:quinone oxidoreductase (491 aa).

It belongs to the MQO family. It depends on FAD as a cofactor.

The enzyme catalyses (S)-malate + a quinone = a quinol + oxaloacetate. The protein operates within carbohydrate metabolism; tricarboxylic acid cycle; oxaloacetate from (S)-malate (quinone route): step 1/1. The sequence is that of Probable malate:quinone oxidoreductase from Actinobacillus pleuropneumoniae serotype 5b (strain L20).